Reading from the N-terminus, the 183-residue chain is Peptide deformylase (183 aa).

The Fe cation site is built by Cys111 and His154. Residue Glu155 is part of the active site. His158 contacts Fe cation.

It belongs to the polypeptide deformylase family. It depends on Fe(2+) as a cofactor.

The catalysed reaction is N-terminal N-formyl-L-methionyl-[peptide] + H2O = N-terminal L-methionyl-[peptide] + formate. Functionally, removes the formyl group from the N-terminal Met of newly synthesized proteins. Requires at least a dipeptide for an efficient rate of reaction. N-terminal L-methionine is a prerequisite for activity but the enzyme has broad specificity at other positions. The chain is Peptide deformylase from Staphylococcus epidermidis (strain ATCC 35984 / DSM 28319 / BCRC 17069 / CCUG 31568 / BM 3577 / RP62A).